The sequence spans 331 residues: MVTYKDSGVNIEEGYKSVKLMKEYSAQTFIPGVLNGLGSFAGMFELGKYKNPVLVSGTDGVGTKLKIAFEMKIYDTVGIDCVAMCVNDILCHGAKPLFFLDYLACSNLEAEVAAELVKGISKGCMDAGCALIGGETAEMPGFYSKGEYDMAGFAVGVVEKDNIINGSTVEEGDVLVGIASSGVHSNGYSLVRKLVDNFQVDFFGSALGEVLLTPTRIYVKPVLKLLEKFKIKAMAHITGGGFYENIPRMFKEDFTAVIDKNSFEMPEIFKYIMDLGVDEEHMYNTYNMGIGFVLCVDSKDAPDIIKDLNEMGEKAYIIGHVKRREKRVCLK.

Belongs to the AIR synthase family.

Its subcellular location is the cytoplasm. The enzyme catalyses 2-formamido-N(1)-(5-O-phospho-beta-D-ribosyl)acetamidine + ATP = 5-amino-1-(5-phospho-beta-D-ribosyl)imidazole + ADP + phosphate + H(+). It participates in purine metabolism; IMP biosynthesis via de novo pathway; 5-amino-1-(5-phospho-D-ribosyl)imidazole from N(2)-formyl-N(1)-(5-phospho-D-ribosyl)glycinamide: step 2/2. This is Phosphoribosylformylglycinamidine cyclo-ligase from Clostridium kluyveri (strain NBRC 12016).